A 296-amino-acid polypeptide reads, in one-letter code: Acetylglutamate kinase (296 aa).

Substrate is bound by residues 67–68 (GG), Arg89, and Asn194.

It belongs to the acetylglutamate kinase family. ArgB subfamily.

It is found in the cytoplasm. It catalyses the reaction N-acetyl-L-glutamate + ATP = N-acetyl-L-glutamyl 5-phosphate + ADP. Its pathway is amino-acid biosynthesis; L-arginine biosynthesis; N(2)-acetyl-L-ornithine from L-glutamate: step 2/4. In terms of biological role, catalyzes the ATP-dependent phosphorylation of N-acetyl-L-glutamate. The chain is Acetylglutamate kinase from Brucella canis (strain ATCC 23365 / NCTC 10854 / RM-666).